Reading from the N-terminus, the 63-residue chain is DNA-directed RNA polymerase 7 kDa subunit (63 aa).

It belongs to the poxviridae DNA-directed RNA polymerase 7 kDa subunit family. The DNA-dependent RNA polymerase used for intermediate and late genes expression consists of eight subunits 147 kDa, 133 kDa, 35 kDa, 30 kDa, 22 kDa, 19 kDa, 18 kDa and 7 kDa totalling more than 500 kDa in mass. The same holoenzyme, with the addition of the transcription-specificity factor RAP94, is used for early gene expression.

The protein localises to the virion. The enzyme catalyses RNA(n) + a ribonucleoside 5'-triphosphate = RNA(n+1) + diphosphate. Its function is as follows. Part of the DNA-dependent RNA polymerase which catalyzes the transcription of viral DNA into RNA using the four ribonucleoside triphosphates as substrates. Responsible for the transcription of early, intermediate and late genes. DNA-dependent RNA polymerase associates with the early transcription factor (ETF) thereby allowing the early genes transcription. Late transcription, and probably also intermediate transcription, require newly synthesized RNA polymerase. The protein is DNA-directed RNA polymerase 7 kDa subunit (RPO7) of Homo sapiens (Human).